The primary structure comprises 167 residues: MHIGRREMPRHRKARHCQRFVADSCRSTETHSQVEDRVVRALMEDDVDLWRKMKYMVISSKNNDDKTMDTMRKFCERVTMAEESVEDLYYEKKYVKRFDKDTDDYMGQVTLPSARELAAAMKVGGRIGERRRKRDERVNELERKELELCGYDLVDGQCVLTGNLTRE.

This is an uncharacterized protein from Magallana gigas (Pacific oyster).